Consider the following 307-residue polypeptide: Ribosomal RNA small subunit methyltransferase H (307 aa).

Residues 31–33 (GGH), Asp-51, Tyr-83, Asp-97, and Gln-104 contribute to the S-adenosyl-L-methionine site.

This sequence belongs to the methyltransferase superfamily. RsmH family.

Its subcellular location is the cytoplasm. It catalyses the reaction cytidine(1402) in 16S rRNA + S-adenosyl-L-methionine = N(4)-methylcytidine(1402) in 16S rRNA + S-adenosyl-L-homocysteine + H(+). Functionally, specifically methylates the N4 position of cytidine in position 1402 (C1402) of 16S rRNA. In Buchnera aphidicola subsp. Cinara cedri (strain Cc), this protein is Ribosomal RNA small subunit methyltransferase H.